The primary structure comprises 493 residues: Cytochrome P450 2E1 (493 aa).

A substrate-binding site is contributed by 298 to 303 (FAGTET). C437 provides a ligand contact to heme.

The protein belongs to the cytochrome P450 family. In terms of assembly, interacts with chaperones HSP70 and HSP90; this interaction is required for initial targeting to mitochondria. Heme serves as cofactor.

It localises to the endoplasmic reticulum membrane. The protein localises to the microsome membrane. The protein resides in the mitochondrion inner membrane. It catalyses the reaction an organic molecule + reduced [NADPH--hemoprotein reductase] + O2 = an alcohol + oxidized [NADPH--hemoprotein reductase] + H2O + H(+). It carries out the reaction (5Z,8Z,11Z)-eicosatrienoate + reduced [NADPH--hemoprotein reductase] + O2 = 19-hydroxy-(5Z,8Z,11Z)-eicosatrienoate + oxidized [NADPH--hemoprotein reductase] + H2O + H(+). The catalysed reaction is (5Z,8Z,11Z,14Z,17Z)-eicosapentaenoate + reduced [NADPH--hemoprotein reductase] + O2 = 19-hydroxy-(5Z,8Z,11Z,14Z,17Z)-eicosapentaenoate + oxidized [NADPH--hemoprotein reductase] + H2O + H(+). The enzyme catalyses (4Z,7Z,10Z,13Z,16Z,19Z)-docosahexaenoate + reduced [NADPH--hemoprotein reductase] + O2 = 21-hydroxy-(4Z,7Z,10Z,13Z,16Z,19Z)-docosahexaenoate + oxidized [NADPH--hemoprotein reductase] + H2O + H(+). It catalyses the reaction dodecanoate + reduced [NADPH--hemoprotein reductase] + O2 = 11-hydroxydodecanoate + oxidized [NADPH--hemoprotein reductase] + H2O + H(+). It carries out the reaction tetradecanoate + reduced [NADPH--hemoprotein reductase] + O2 = 13-hydroxytetradecanoate + oxidized [NADPH--hemoprotein reductase] + H2O + H(+). The catalysed reaction is 4-nitrophenol + NADPH + O2 + H(+) = 4-nitrocatechol + NADP(+) + H2O. It participates in lipid metabolism; fatty acid metabolism. With respect to regulation, the omega-1 hydroxylase activity is stimulated by cytochrome b5. A cytochrome P450 monooxygenase involved in the metabolism of fatty acids. Mechanistically, uses molecular oxygen inserting one oxygen atom into a substrate, and reducing the second into a water molecule, with two electrons provided by NADPH via cytochrome P450 reductase (NADPH--hemoprotein reductase). Catalyzes the hydroxylation of carbon-hydrogen bonds. Hydroxylates fatty acids specifically at the omega-1 position displaying the highest catalytic activity for saturated fatty acids. May be involved in the oxidative metabolism of xenobiotics. The chain is Cytochrome P450 2E1 (CYP2E1) from Mesocricetus auratus (Golden hamster).